Consider the following 398-residue polypeptide: Leucine carboxyl methyltransferase 1 (398 aa).

Positions 1–11 (MSASQIPNLNT) are enriched in polar residues. A disordered region spans residues 1-54 (MSASQIPNLNTLRRGGGRGRLRGRGGFETGAPSEDRHGSRGLAAQDRVVQGTDN). Residues arginine 97, glycine 123, aspartate 151, and 201-202 (DL) contribute to the S-adenosyl-L-methionine site. Residues 208–218 (SGSATTSRSPS) are compositionally biased toward low complexity. Positions 208-232 (SGSATTSRSPSSPNPAEKDQPPCPL) are disordered. S-adenosyl-L-methionine is bound at residue glutamate 246.

It belongs to the methyltransferase superfamily. LCMT family.

It carries out the reaction [phosphatase 2A protein]-C-terminal L-leucine + S-adenosyl-L-methionine = [phosphatase 2A protein]-C-terminal L-leucine methyl ester + S-adenosyl-L-homocysteine. Functionally, methylates the carboxyl group of the C-terminal leucine residue of protein phosphatase 2A catalytic subunits to form alpha-leucine ester residues. This is Leucine carboxyl methyltransferase 1 (ppm1) from Aspergillus fumigatus (strain ATCC MYA-4609 / CBS 101355 / FGSC A1100 / Af293) (Neosartorya fumigata).